The primary structure comprises 257 residues: Hydroxyacylglutathione hydrolase (257 aa).

Zn(2+) contacts are provided by H54, H56, D58, H59, H113, D137, and H175.

It belongs to the metallo-beta-lactamase superfamily. Glyoxalase II family. As to quaternary structure, monomer. Zn(2+) is required as a cofactor.

It catalyses the reaction an S-(2-hydroxyacyl)glutathione + H2O = a 2-hydroxy carboxylate + glutathione + H(+). The protein operates within secondary metabolite metabolism; methylglyoxal degradation; (R)-lactate from methylglyoxal: step 2/2. In terms of biological role, thiolesterase that catalyzes the hydrolysis of S-D-lactoyl-glutathione to form glutathione and D-lactic acid. The protein is Hydroxyacylglutathione hydrolase of Microcystis aeruginosa (strain NIES-843 / IAM M-2473).